The chain runs to 941 residues: Gamma-aminobutyric acid type B receptor subunit 2 (941 aa).

An N-terminal signal peptide occupies residues 1–41; that stretch reads MASPRSSGQPGPPPPPPPPPARLLLLLLLPLLLPLAPGAWG. Residues 42–483 lie on the Extracellular side of the membrane; that stretch reads WARGAPRPPP…LRKISLPLYS (442 aa). N-linked (GlcNAc...) asparagine glycosylation is present at asparagine 90. Disulfide bonds link cysteine 108-cysteine 135, cysteine 237-cysteine 266, and cysteine 265-cysteine 302. Residues asparagine 298, asparagine 389, asparagine 404, and asparagine 453 are each glycosylated (N-linked (GlcNAc...) asparagine). The helical transmembrane segment at 484–504 threads the bilayer; that stretch reads ILSALTILGMIMASAFLFFNI. Residues 505-522 are Cytoplasmic-facing; that stretch reads KNRNQKLIKMSSPYMNNL. Residues 523 to 543 traverse the membrane as a helical segment; the sequence is IILGGMLSYASIFLFGLDGSF. Residues 544–551 are Extracellular-facing; sequence VSEKTFET. Residues 552-572 form a helical membrane-spanning segment; that stretch reads LCTVRTWILTVGYTTAFGAMF. At 573 to 597 the chain is on the cytoplasmic side; that stretch reads AKTWRVHAIFKNVKMKKKIIKDQKL. The helical transmembrane segment at 598-618 threads the bilayer; sequence LVIVGGMLLIDLCILICWQAV. Residues 619 to 654 are Extracellular-facing; that stretch reads DPLRRTVEKYSMEPDPAGRDISIRPLLEHCENTHMT. The helical transmembrane segment at 655 to 675 threads the bilayer; it reads IWLGIVYAYKGLLMLFGCFLA. Topologically, residues 676–691 are cytoplasmic; that stretch reads WETRNVSIPALNDSKY. Residues 692–712 traverse the membrane as a helical segment; it reads IGMSVYNVGIMCIIGAAVSFL. At 713–720 the chain is on the extracellular side; it reads TRDQPNVQ. Residues 721-741 form a helical membrane-spanning segment; it reads FCIVALVIIFCSTITLCLVFV. Topologically, residues 742 to 941 are cytoplasmic; that stretch reads PKLITLRTNP…PSFRVMVSGL (200 aa). Residues 763–790 form a disordered region; the sequence is TQNQKKEDSKTSTSVTSVNQASTSRLEG. Over residues 773-787 the composition is skewed to polar residues; the sequence is TSTSVTSVNQASTSR. 2 positions are modified to phosphoserine: serine 776 and serine 779. The stretch at 781-819 forms a coiled coil; the sequence is NQASTSRLEGLQSENHRLRMKITELDKDLEEVTMQLQDT. Position 819 is a phosphothreonine (threonine 819). Serine 884, serine 893, serine 913, serine 916, serine 920, and serine 924 each carry phosphoserine.

Belongs to the G-protein coupled receptor 3 family. GABA-B receptor subfamily. As to quaternary structure, heterodimer of GABBR1 and GABBR2. Homodimers may form, but are inactive. Interacts (via C-terminus) with ATF4 (via leucine zipper domain). As to expression, highly expressed in brain, especially in cerebral cortex, thalamus, hippocampus, frontal, occipital and temporal lobe, occipital pole and cerebellum, followed by corpus callosum, caudate nucleus, spinal cord, amygdala and medulla. Weakly expressed in heart, testis and skeletal muscle.

The protein localises to the cell membrane. It is found in the postsynaptic cell membrane. Its function is as follows. Component of a heterodimeric G-protein coupled receptor for GABA, formed by GABBR1 and GABBR2. Within the heterodimeric GABA receptor, only GABBR1 seems to bind agonists, while GABBR2 mediates coupling to G proteins. Ligand binding causes a conformation change that triggers signaling via guanine nucleotide-binding proteins (G proteins) and modulates the activity of down-stream effectors, such as adenylate cyclase. Signaling inhibits adenylate cyclase, stimulates phospholipase A2, activates potassium channels, inactivates voltage-dependent calcium-channels and modulates inositol phospholipid hydrolysis. Plays a critical role in the fine-tuning of inhibitory synaptic transmission. Pre-synaptic GABA receptor inhibits neurotransmitter release by down-regulating high-voltage activated calcium channels, whereas postsynaptic GABA receptor decreases neuronal excitability by activating a prominent inwardly rectifying potassium (Kir) conductance that underlies the late inhibitory postsynaptic potentials. Not only implicated in synaptic inhibition but also in hippocampal long-term potentiation, slow wave sleep, muscle relaxation and antinociception. This Homo sapiens (Human) protein is Gamma-aminobutyric acid type B receptor subunit 2 (GABBR2).